Reading from the N-terminus, the 383-residue chain is Anhydro-N-acetylmuramic acid kinase (383 aa).

Position 9-16 (9-16) interacts with ATP; sequence GTSLDGID.

The protein belongs to the anhydro-N-acetylmuramic acid kinase family.

It carries out the reaction 1,6-anhydro-N-acetyl-beta-muramate + ATP + H2O = N-acetyl-D-muramate 6-phosphate + ADP + H(+). It participates in amino-sugar metabolism; 1,6-anhydro-N-acetylmuramate degradation. The protein operates within cell wall biogenesis; peptidoglycan recycling. Functionally, catalyzes the specific phosphorylation of 1,6-anhydro-N-acetylmuramic acid (anhMurNAc) with the simultaneous cleavage of the 1,6-anhydro ring, generating MurNAc-6-P. Is required for the utilization of anhMurNAc either imported from the medium or derived from its own cell wall murein, and thus plays a role in cell wall recycling. In Clostridioides difficile (strain 630) (Peptoclostridium difficile), this protein is Anhydro-N-acetylmuramic acid kinase.